We begin with the raw amino-acid sequence, 200 residues long: Peptidyl-tRNA hydrolase (200 aa).

Tyrosine 23 contacts tRNA. Residue histidine 28 is the Proton acceptor of the active site. TRNA is bound by residues phenylalanine 79, asparagine 81, and asparagine 127.

The protein belongs to the PTH family. Monomer.

The protein resides in the cytoplasm. The enzyme catalyses an N-acyl-L-alpha-aminoacyl-tRNA + H2O = an N-acyl-L-amino acid + a tRNA + H(+). Its function is as follows. Hydrolyzes ribosome-free peptidyl-tRNAs (with 1 or more amino acids incorporated), which drop off the ribosome during protein synthesis, or as a result of ribosome stalling. In terms of biological role, catalyzes the release of premature peptidyl moieties from peptidyl-tRNA molecules trapped in stalled 50S ribosomal subunits, and thus maintains levels of free tRNAs and 50S ribosomes. The sequence is that of Peptidyl-tRNA hydrolase from Streptomyces coelicolor (strain ATCC BAA-471 / A3(2) / M145).